A 735-amino-acid polypeptide reads, in one-letter code: Phosphoribosylformylglycinamidine synthase subunit PurL (735 aa).

Residue histidine 50 is part of the active site. 2 residues coordinate ATP: tyrosine 53 and lysine 92. Position 94 (glutamate 94) interacts with Mg(2+). Substrate-binding positions include 95-98 and arginine 117; that span reads SHNH. The active-site Proton acceptor is histidine 96. Residue aspartate 118 participates in Mg(2+) binding. Glutamine 241 is a binding site for substrate. Residue aspartate 269 participates in Mg(2+) binding. Residue 313-315 coordinates substrate; it reads ESQ. Residues aspartate 495 and glycine 532 each coordinate ATP. A Mg(2+)-binding site is contributed by asparagine 533. Position 535 (serine 535) interacts with substrate.

This sequence belongs to the FGAMS family. In terms of assembly, monomer. Part of the FGAM synthase complex composed of 1 PurL, 1 PurQ and 2 PurS subunits.

It is found in the cytoplasm. It catalyses the reaction N(2)-formyl-N(1)-(5-phospho-beta-D-ribosyl)glycinamide + L-glutamine + ATP + H2O = 2-formamido-N(1)-(5-O-phospho-beta-D-ribosyl)acetamidine + L-glutamate + ADP + phosphate + H(+). Its pathway is purine metabolism; IMP biosynthesis via de novo pathway; 5-amino-1-(5-phospho-D-ribosyl)imidazole from N(2)-formyl-N(1)-(5-phospho-D-ribosyl)glycinamide: step 1/2. Functionally, part of the phosphoribosylformylglycinamidine synthase complex involved in the purines biosynthetic pathway. Catalyzes the ATP-dependent conversion of formylglycinamide ribonucleotide (FGAR) and glutamine to yield formylglycinamidine ribonucleotide (FGAM) and glutamate. The FGAM synthase complex is composed of three subunits. PurQ produces an ammonia molecule by converting glutamine to glutamate. PurL transfers the ammonia molecule to FGAR to form FGAM in an ATP-dependent manner. PurS interacts with PurQ and PurL and is thought to assist in the transfer of the ammonia molecule from PurQ to PurL. This is Phosphoribosylformylglycinamidine synthase subunit PurL from Bartonella henselae (strain ATCC 49882 / DSM 28221 / CCUG 30454 / Houston 1) (Rochalimaea henselae).